A 290-amino-acid chain; its full sequence is Endoplasmic reticulum-Golgi intermediate compartment protein 1 (290 aa).

Over 1 to 26 the chain is Cytoplasmic; sequence MPFDFRRFDIYRKVPKDLTQPTYTGA. A helical transmembrane segment spans residues 27–47; that stretch reads IISICCCLFITFLFLSELTGF. Topologically, residues 48–254 are lumenal; the sequence is IANEIVNELY…RRQPMYRFIT (207 aa). N74 is a glycosylation site (N-linked (GlcNAc...) asparagine). The helical transmembrane segment at 255-275 threads the bilayer; that stretch reads TVCAIIGGTFTVAGILDSFIF. Residues 276 to 290 are Cytoplasmic-facing; sequence TASEAWKKIQLGKMQ.

Belongs to the ERGIC family.

The protein localises to the endoplasmic reticulum membrane. The protein resides in the endoplasmic reticulum-Golgi intermediate compartment membrane. It is found in the golgi apparatus membrane. Its function is as follows. Possible role in transport between endoplasmic reticulum and Golgi. This is Endoplasmic reticulum-Golgi intermediate compartment protein 1 (ergic1) from Xenopus laevis (African clawed frog).